We begin with the raw amino-acid sequence, 283 residues long: 4-diphosphocytidyl-2-C-methyl-D-erythritol kinase (283 aa).

Residue Lys-13 is part of the active site. 96 to 106 (PMGGGIGGGSS) lines the ATP pocket. The active site involves Asp-138.

It belongs to the GHMP kinase family. IspE subfamily.

It catalyses the reaction 4-CDP-2-C-methyl-D-erythritol + ATP = 4-CDP-2-C-methyl-D-erythritol 2-phosphate + ADP + H(+). It functions in the pathway isoprenoid biosynthesis; isopentenyl diphosphate biosynthesis via DXP pathway; isopentenyl diphosphate from 1-deoxy-D-xylulose 5-phosphate: step 3/6. In terms of biological role, catalyzes the phosphorylation of the position 2 hydroxy group of 4-diphosphocytidyl-2C-methyl-D-erythritol. The protein is 4-diphosphocytidyl-2-C-methyl-D-erythritol kinase of Pseudomonas fluorescens (strain Pf0-1).